The primary structure comprises 702 residues: Vertnin (702 aa).

The disordered stretch occupies residues valine 562–leucine 625. Residues glutamine 570–arginine 582 show a composition bias toward basic and acidic residues.

Belongs to the vertnin family.

It is found in the nucleus. Acts as a transcription factor that regulates development of thoracic vertebrae. The chain is Vertnin from Homo sapiens (Human).